Reading from the N-terminus, the 1399-residue chain is DNA-directed RNA polymerase subunit beta' (1399 aa).

Zn(2+) is bound by residues Cys-70, Cys-72, Cys-85, and Cys-88. Mg(2+)-binding residues include Asp-460, Asp-462, and Asp-464. Zn(2+)-binding residues include Cys-814, Cys-888, Cys-895, and Cys-898.

The protein belongs to the RNA polymerase beta' chain family. In terms of assembly, the RNAP catalytic core consists of 2 alpha, 1 beta, 1 beta' and 1 omega subunit. When a sigma factor is associated with the core the holoenzyme is formed, which can initiate transcription. It depends on Mg(2+) as a cofactor. The cofactor is Zn(2+).

The catalysed reaction is RNA(n) + a ribonucleoside 5'-triphosphate = RNA(n+1) + diphosphate. Functionally, DNA-dependent RNA polymerase catalyzes the transcription of DNA into RNA using the four ribonucleoside triphosphates as substrates. This is DNA-directed RNA polymerase subunit beta' from Pseudomonas fluorescens (strain SBW25).